The following is a 342-amino-acid chain: tRNA N6-adenosine threonylcarbamoyltransferase (342 aa).

Fe cation contacts are provided by H111 and H115. Substrate contacts are provided by residues 134 to 138 (LVSGG), D167, G180, and N275. Position 303 (D303) interacts with Fe cation.

The protein belongs to the KAE1 / TsaD family. It depends on Fe(2+) as a cofactor.

The protein resides in the cytoplasm. It catalyses the reaction L-threonylcarbamoyladenylate + adenosine(37) in tRNA = N(6)-L-threonylcarbamoyladenosine(37) in tRNA + AMP + H(+). In terms of biological role, required for the formation of a threonylcarbamoyl group on adenosine at position 37 (t(6)A37) in tRNAs that read codons beginning with adenine. Is involved in the transfer of the threonylcarbamoyl moiety of threonylcarbamoyl-AMP (TC-AMP) to the N6 group of A37, together with TsaE and TsaB. TsaD likely plays a direct catalytic role in this reaction. The chain is tRNA N6-adenosine threonylcarbamoyltransferase from Paraburkholderia xenovorans (strain LB400).